The chain runs to 179 residues: Large ribosomal subunit protein uL5 (179 aa).

The protein belongs to the universal ribosomal protein uL5 family. As to quaternary structure, part of the 50S ribosomal subunit; part of the 5S rRNA/L5/L18/L25 subcomplex. Contacts the 5S rRNA and the P site tRNA. Forms a bridge to the 30S subunit in the 70S ribosome.

Functionally, this is one of the proteins that bind and probably mediate the attachment of the 5S RNA into the large ribosomal subunit, where it forms part of the central protuberance. In the 70S ribosome it contacts protein S13 of the 30S subunit (bridge B1b), connecting the 2 subunits; this bridge is implicated in subunit movement. Contacts the P site tRNA; the 5S rRNA and some of its associated proteins might help stabilize positioning of ribosome-bound tRNAs. The sequence is that of Large ribosomal subunit protein uL5 from Bacillus licheniformis (strain ATCC 14580 / DSM 13 / JCM 2505 / CCUG 7422 / NBRC 12200 / NCIMB 9375 / NCTC 10341 / NRRL NRS-1264 / Gibson 46).